The primary structure comprises 1052 residues: MEDSDFDDAELDELYEKAINRRVNETLIRRSLPVQRDLQNGVVPGQDTYYEEIRTEVTFGPTHHQLNEELLHSYIYPTNFEVRDYQFDIVRKGLLQNILCAIPTGMGKTFIASTVMLNFFRWTKTAKIIFTAPTRPLVAQQIKACLGITGIPHDQTAILLDKTRKNREEIWANKRVFFTTPQVVENDLKRGVLNPKDIVCLVIDEAHRATGSYAYANLVKFINRFNSSYRLLALTATPATDIEGVQEVVNNLNISKIEIRTEESMDIVKYMKKKIKDRVNIQTTVEIENIVEQLGIAILPVLNQAVELGIYESCPPSAINAFKAMQKSQAIIMNPSIPEGIKWRNYFILQLLNHVGQMLKRIKIYGIRTFFSYFQNKVKEFTTKYDLGKSTNKIAAGFYYHPMIQAITKECEEKIKDPNFLGHGKLEHLRDELTQFFYENPFESRVIIFTELRESALEIVKCIDSMENSEIRPHIFIGQAKGKEGFDEVKFVRKHGPKGRKKSDREKRLEEERRMDEEKKQAALQEKLERTSRRTGSSEEAQLSGMNQKQQKEVIKKFKSGLYNVLVCTSIGEEGLDIGEVDLIICYDTTSSPIKNIQRMGRTGRKRDGRIVLMFSSNEASKFDQSMNDYYNLQKLISQHLVQYRKSDRILPPENQEPECEKKFIEVSEEDQELNNMEDTDDVIRFATQCMLGKIPKTKKGRDKGKAKKGKTFFMPDNVITGIITANNLVRKRKSAQNGSGAALLDSIVNDDIDLEDEDGQVEILDVDQEVNRRLASNAVQKTNDMALQIRNEETPEIGDTRNKAKASSSMKVKKEPTMAVDHSDDEEDLPLSRHVERASRETAKEVPNATNVAEKPFPPLEFGVQRPSKRQRLQPEVQPEVQPEVQPEVQPEVQPEVQPEVTVKPEVKIKTEEGSKLYKNIFFSDEGFLQPHEKELFLSKYNPEDATVTIEPVPRFVRAHGRVKHSKRTEQLITLFEDMNHNRVARTIEMNKLRGIARRLHTVSQSQGQSNSQSQAHSTSQKSQQASQKDRSSQDKDLTNSELEDLLDSDF.

The 168-residue stretch at 89–256 folds into the Helicase ATP-binding domain; that stretch reads IVRKGLLQNI…EVVNNLNISK (168 aa). Residue 102–109 coordinates ATP; sequence IPTGMGKT. The short motif at 204 to 207 is the DEAH box element; it reads DEAH. Positions 432 to 649 constitute a Helicase C-terminal domain; the sequence is ELTQFFYENP…HLVQYRKSDR (218 aa). Disordered regions lie at residues 495 to 550, 798 to 832, 869 to 898, and 1002 to 1052; these read HGPK…NQKQ, IGDT…DLPL, SKRQ…QPEV, and HTVS…DSDF. Basic and acidic residues predominate over residues 503 to 532; sequence SDREKRLEEERRMDEEKKQAALQEKLERTS. The span at 534–549 shows a compositional bias: polar residues; that stretch reads RTGSSEEAQLSGMNQK. Low complexity-rich tracts occupy residues 875 to 898 and 1005 to 1028; these read QPEV…QPEV and SQSQ…QQAS. Residues 1029–1040 show a composition bias toward basic and acidic residues; that stretch reads QKDRSSQDKDLT. Acidic residues predominate over residues 1043–1052; sequence ELEDLLDSDF.

The protein belongs to the DEAD box helicase family. DEAH subfamily. FANCM sub-subfamily. Interacts with the MHF histone-fold complex to form the FANCM-MHF complex.

The protein localises to the nucleus. It carries out the reaction ATP + H2O = ADP + phosphate + H(+). In terms of biological role, ATP-dependent DNA helicase involved in DNA damage repair by homologous recombination and in genome maintenance. Capable of unwinding D-loops. Plays a role in limiting crossover recombinants during mitotic DNA double-strand break (DSB) repair. Component of a FANCM-MHF complex which promotes gene conversion at blocked replication forks, probably by reversal of the stalled fork. The polypeptide is ATP-dependent DNA helicase MPH1 (Candida glabrata (strain ATCC 2001 / BCRC 20586 / JCM 3761 / NBRC 0622 / NRRL Y-65 / CBS 138) (Yeast)).